The chain runs to 412 residues: Non-specific lipid-transfer protein-like 2 (412 aa).

The short motif at 410–412 is the Microbody targeting signal element; it reads SKI.

Belongs to the thiolase-like superfamily. Thiolase family. In terms of tissue distribution, expressed in intestine, hypodermis and body-wall muscle.

The protein localises to the peroxisome. The enzyme catalyses choloyl-CoA + propanoyl-CoA = 3alpha,7alpha,12alpha-trihydroxy-24-oxo-5beta-cholestan-26-oyl-CoA + CoA. Its activity is regulated as follows. Inhibited by acetyl-CoA. Its function is as follows. Catalyzes the thiolytic cleavage of 3-ketoacyl-CoA with 8-16 carbon residues in the acyl group using a ping-pong mechanism whereby binding to 3-ketooctanoyl-CoA results in the release of acetyl-CoA and the subsequent addition of CoA produces 3-ketohexanohyl-CoA. Involved in the biosynthesis of the dauer pheromone by providing short chains of fatty acid that are attached to the ascarylose sugars of the pheromone. This is Non-specific lipid-transfer protein-like 2 from Caenorhabditis elegans.